Consider the following 148-residue polypeptide: Transcriptional regulator MraZ (148 aa).

SpoVT-AbrB domains are found at residues 5–53 (ETAI…AEKE) and 82–125 (SAVL…SEQA).

This sequence belongs to the MraZ family. In terms of assembly, forms oligomers.

It localises to the cytoplasm. The protein localises to the nucleoid. The chain is Transcriptional regulator MraZ from Xanthomonas axonopodis pv. citri (strain 306).